The sequence spans 290 residues: Arylamine N-acetyltransferase 2 (290 aa).

The active-site Acyl-thioester intermediate is C68. S103 and G104 together coordinate CoA. 106–107 (IH) serves as a coordination point for substrate. Catalysis depends on residues H107 and D122. Residue Y208 participates in CoA binding.

It belongs to the arylamine N-acetyltransferase family.

The protein resides in the cytoplasm. It catalyses the reaction an arylamine + acetyl-CoA = an N-acetylarylamine + CoA. It carries out the reaction an N-hydroxyarylamine + acetyl-CoA = an N-acetoxyarylamine + CoA. Catalyzes the N- or O-acetylation of various arylamine and heterocyclic amine substrates, and participates in the detoxification of a plethora of hydrazine and arylamine drugs. This Mus musculus (Mouse) protein is Arylamine N-acetyltransferase 2 (Nat2).